The chain runs to 443 residues: Probable D-serine dehydratase (443 aa).

N6-(pyridoxal phosphate)lysine is present on Lys118.

The protein belongs to the serine/threonine dehydratase family. DsdA subfamily. It depends on pyridoxal 5'-phosphate as a cofactor.

The enzyme catalyses D-serine = pyruvate + NH4(+). This Aeromonas hydrophila subsp. hydrophila (strain ATCC 7966 / DSM 30187 / BCRC 13018 / CCUG 14551 / JCM 1027 / KCTC 2358 / NCIMB 9240 / NCTC 8049) protein is Probable D-serine dehydratase.